Here is a 182-residue protein sequence, read N- to C-terminus: Dual-action ribosomal maturation protein DarP (182 aa).

It belongs to the DarP family.

It is found in the cytoplasm. In terms of biological role, member of a network of 50S ribosomal subunit biogenesis factors which assembles along the 30S-50S interface, preventing incorrect 23S rRNA structures from forming. Promotes peptidyl transferase center (PTC) maturation. This is Dual-action ribosomal maturation protein DarP from Yersinia pseudotuberculosis serotype O:1b (strain IP 31758).